A 328-amino-acid chain; its full sequence is Tetraacyldisaccharide 4'-kinase (328 aa).

59–66 (TAGGNGKT) contacts ATP.

Belongs to the LpxK family.

It carries out the reaction a lipid A disaccharide + ATP = a lipid IVA + ADP + H(+). It functions in the pathway glycolipid biosynthesis; lipid IV(A) biosynthesis; lipid IV(A) from (3R)-3-hydroxytetradecanoyl-[acyl-carrier-protein] and UDP-N-acetyl-alpha-D-glucosamine: step 6/6. In terms of biological role, transfers the gamma-phosphate of ATP to the 4'-position of a tetraacyldisaccharide 1-phosphate intermediate (termed DS-1-P) to form tetraacyldisaccharide 1,4'-bis-phosphate (lipid IVA). This Aliivibrio fischeri (strain MJ11) (Vibrio fischeri) protein is Tetraacyldisaccharide 4'-kinase.